Reading from the N-terminus, the 308-residue chain is MPGQELRTVNGSQMLLVLLVLSWLPHGGALSLAEASRASFPGPSELHSEDSRFRELRKRYEDLLTRLRANQSWEDSNTDLVPAPAVRILTPEVRLGSGGHLHLRISRAALPEGLPEASRLHRALFRLSPTASRSWDVTRPLRRQLSLARPQAPALHLRLSPPPSQSDQLLAESSSARPQLELHLRPQAARGRRRARARNGDHCPLGPGRCCRLHTVRASLEDLGWADWVLSPREVQVTMCIGACPSQFRAANMHAQIKTSLHRLKPDTVPAPCCVPASYNPMVLIQKTDTGVSLQTYDDLLAKDCHCI.

Residues 1-29 form the signal peptide; that stretch reads MPGQELRTVNGSQMLLVLLVLSWLPHGGA. Residues 30–194 constitute a propeptide that is removed on maturation; it reads LSLAEASRAS…RPQAARGRRR (165 aa). N-linked (GlcNAc...) asparagine glycosylation is present at Asn-70. Positions 152–177 are disordered; that stretch reads APALHLRLSPPPSQSDQLLAESSSAR. Over residues 165 to 177 the composition is skewed to polar residues; it reads QSDQLLAESSSAR. Intrachain disulfides connect Cys-203-Cys-210, Cys-211-Cys-274, Cys-240-Cys-305, and Cys-244-Cys-307.

It belongs to the TGF-beta family. As to quaternary structure, homodimer; disulfide-linked. Interacts with GFRAL and RET; ligand of GFRAL, which mediates GDF15 internalization and cellular signaling through interaction with RET via the formation of a 2:2:2 ternary complex composed of GDF15, GFRAL and RET. Detected in plasma (at protein level). Highly expressed in placenta, with lower levels in prostate and colon and some expression in kidney.

The protein resides in the secreted. Functionally, hormone produced in response to various stresses to confer information about those stresses to the brain, and trigger an aversive response, characterized by nausea, vomiting, and/or loss of appetite. The aversive response is both required to reduce continuing exposure to those stresses at the time of exposure and to promote avoidance behavior in the future. Acts by binding to its receptor, GFRAL, activating GFRAL-expressing neurons localized in the area postrema and nucleus tractus solitarius of the brainstem. It then triggers the activation of neurons localized within the parabrachial nucleus and central amygdala, which constitutes part of the 'emergency circuit' that shapes responses to stressful conditions. The GDF15-GFRAL signal induces expression of genes involved in metabolism, such as lipid metabolism in adipose tissues. Required for avoidance behavior in response to food allergens: induced downstream of mast cell activation to promote aversion and minimize harmful effects of exposure to noxious substances. In addition to suppress appetite, also promotes weight loss by enhancing energy expenditure in muscle: acts by increasing calcium futile cycling in muscle. Contributes to the effect of metformin, an anti-diabetic drug, on appetite reduction and weight loss: produced in the kidney in response to metformin treatment, thereby activating the GDF15-GFRAL response, leading to reduced appetite and weight. The contribution of GDF15 to weight loss following metformin treatment is however limited and subject to discussion. Produced in response to anticancer drugs, such as camptothecin or cisplatin, promoting nausea, vomiting and contributing to malnutrition. Overproduced in many cancers, promoting anorexia in cancer (cachexia). Responsible for the risk of nausea and vomiting during pregnancy: high levels of GDF15 during pregnancy, mostly originating from the fetus, are associated with increased nausea and vomiting. Maternal sensitivity to nausea is probably determined by pre-pregnancy exposure to GDF15, women with naturally high level of GDF15 being less susceptible to nausea than women with low levels of GDF15 before pregnancy. Promotes metabolic adaptation in response to systemic inflammation caused by bacterial and viral infections in order to promote tissue tolerance and prevent tissue damage. Required for tissue tolerance in response to myocardial infarction by acting as an inhibitor of leukocyte integring activation, thereby protecting against cardiac rupture. Inhibits growth hormone signaling on hepatocytes. The chain is Growth/differentiation factor 15 from Homo sapiens (Human).